The chain runs to 720 residues: Serine/threonine-protein kinase KIN82 (720 aa).

Polar residues-rich tracts occupy residues 1–13 (MTQQ…SQRL) and 99–116 (FNHN…STSE). Disordered regions lie at residues 1 to 20 (MTQQ…RSMS) and 99 to 128 (FNHN…RSTI). Residue Ser-203 is modified to Phosphoserine. The span at 230–241 (SPLANLSLSNSP) shows a compositional bias: low complexity. Positions 230–257 (SPLANLSLSNSPIDSPRKNSETRKDQIP) are disordered. Residues 244–255 (SPRKNSETRKDQ) show a composition bias toward basic and acidic residues. In terms of domain architecture, Protein kinase spans 324-602 (FEKIRLLGQG…AADIKRHPFF (279 aa)). ATP-binding positions include 330 to 338 (LGQGDVGKV) and Lys-353. Asp-449 (proton acceptor) is an active-site residue.

It belongs to the protein kinase superfamily. Ser/Thr protein kinase family. KIN82 subfamily.

The enzyme catalyses L-seryl-[protein] + ATP = O-phospho-L-seryl-[protein] + ADP + H(+). It catalyses the reaction L-threonyl-[protein] + ATP = O-phospho-L-threonyl-[protein] + ADP + H(+). In terms of biological role, flippase activator that phosphorylates DFN1 and DFN2 and which is involved in the generation of phospholipid asymmetry in membranes by the inward translocation of phospholipids. The polypeptide is Serine/threonine-protein kinase KIN82 (KIN82) (Saccharomyces cerevisiae (strain ATCC 204508 / S288c) (Baker's yeast)).